A 314-amino-acid polypeptide reads, in one-letter code: Fumarylacetoacetate hydrolase domain-containing protein 2 (314 aa).

The a divalent metal cation site is built by glutamate 159, glutamate 161, and aspartate 190. Lysine 203 carries the post-translational modification N6-acetyllysine; alternate. Lysine 203 is subject to N6-succinyllysine; alternate. At lysine 234 the chain carries N6-acetyllysine.

This sequence belongs to the FAH family. Ca(2+) serves as cofactor. Mg(2+) is required as a cofactor.

May have hydrolase activity. In Pongo abelii (Sumatran orangutan), this protein is Fumarylacetoacetate hydrolase domain-containing protein 2 (FAHD2).